We begin with the raw amino-acid sequence, 598 residues long: Probable translation initiation factor IF-2 (598 aa).

A tr-type G domain is found at Leu3–Glu223. Positions Gly12–Thr19 are G1. Residue Gly12–Thr19 coordinates GTP. The interval Gly37–His41 is G2. Residues Asp76 to Gly79 are G3. Residues Asp76–His80 and Asn130–Asp133 contribute to the GTP site. Residues Asn130–Asp133 are G4. Residues Ser200–Met202 are G5.

Belongs to the TRAFAC class translation factor GTPase superfamily. Classic translation factor GTPase family. IF-2 subfamily.

Its function is as follows. Function in general translation initiation by promoting the binding of the formylmethionine-tRNA to ribosomes. Seems to function along with eIF-2. This Methanococcus aeolicus (strain ATCC BAA-1280 / DSM 17508 / OCM 812 / Nankai-3) protein is Probable translation initiation factor IF-2.